The primary structure comprises 335 residues: Holliday junction branch migration complex subunit RuvB (335 aa).

A large ATPase domain (RuvB-L) region spans residues 4–184 (ADRLVSAEVL…FGIVQRLEFY (181 aa)). ATP-binding positions include isoleucine 23, arginine 24, glycine 65, lysine 68, threonine 69, threonine 70, 131 to 133 (EDY), arginine 174, tyrosine 184, and arginine 221. Threonine 69 lines the Mg(2+) pocket. Positions 185 to 255 (NVDDLQSIVS…IATRALDMLS (71 aa)) are small ATPAse domain (RuvB-S). Positions 258–335 (AAGFDYLDRK…RHFGMVRNQE (78 aa)) are head domain (RuvB-H). The DNA site is built by arginine 294, arginine 313, and arginine 318.

It belongs to the RuvB family. Homohexamer. Forms an RuvA(8)-RuvB(12)-Holliday junction (HJ) complex. HJ DNA is sandwiched between 2 RuvA tetramers; dsDNA enters through RuvA and exits via RuvB. An RuvB hexamer assembles on each DNA strand where it exits the tetramer. Each RuvB hexamer is contacted by two RuvA subunits (via domain III) on 2 adjacent RuvB subunits; this complex drives branch migration. In the full resolvosome a probable DNA-RuvA(4)-RuvB(12)-RuvC(2) complex forms which resolves the HJ.

It is found in the cytoplasm. The catalysed reaction is ATP + H2O = ADP + phosphate + H(+). The RuvA-RuvB-RuvC complex processes Holliday junction (HJ) DNA during genetic recombination and DNA repair, while the RuvA-RuvB complex plays an important role in the rescue of blocked DNA replication forks via replication fork reversal (RFR). RuvA specifically binds to HJ cruciform DNA, conferring on it an open structure. The RuvB hexamer acts as an ATP-dependent pump, pulling dsDNA into and through the RuvAB complex. RuvB forms 2 homohexamers on either side of HJ DNA bound by 1 or 2 RuvA tetramers; 4 subunits per hexamer contact DNA at a time. Coordinated motions by a converter formed by DNA-disengaged RuvB subunits stimulates ATP hydrolysis and nucleotide exchange. Immobilization of the converter enables RuvB to convert the ATP-contained energy into a lever motion, pulling 2 nucleotides of DNA out of the RuvA tetramer per ATP hydrolyzed, thus driving DNA branch migration. The RuvB motors rotate together with the DNA substrate, which together with the progressing nucleotide cycle form the mechanistic basis for DNA recombination by continuous HJ branch migration. Branch migration allows RuvC to scan DNA until it finds its consensus sequence, where it cleaves and resolves cruciform DNA. The polypeptide is Holliday junction branch migration complex subunit RuvB (Photorhabdus laumondii subsp. laumondii (strain DSM 15139 / CIP 105565 / TT01) (Photorhabdus luminescens subsp. laumondii)).